A 973-amino-acid polypeptide reads, in one-letter code: Probable outer membrane protein pmp13 (973 aa).

Residues methionine 1–threonine 24 form the signal peptide. Over residues glutamine 284–serine 293 the composition is skewed to polar residues. Residues glutamine 284–proline 303 form a disordered region. One can recognise an Autotransporter domain in the interval glutamate 691–phenylalanine 973.

This sequence belongs to the PMP outer membrane protein family.

The protein localises to the secreted. It is found in the cell wall. Its subcellular location is the cell outer membrane. The polypeptide is Probable outer membrane protein pmp13 (pmp13) (Chlamydia pneumoniae (Chlamydophila pneumoniae)).